The sequence spans 514 residues: Peptide chain release factor 3 (514 aa).

Residues 8-268 (KKRRTFAIIS…IFLKFAPEPH (261 aa)) enclose the tr-type G domain. GTP-binding positions include 17–24 (SHPDAGKT), 85–89 (DTPGH), and 139–142 (NKLD).

This sequence belongs to the TRAFAC class translation factor GTPase superfamily. Classic translation factor GTPase family. PrfC subfamily.

The protein localises to the cytoplasm. In terms of biological role, increases the formation of ribosomal termination complexes and stimulates activities of RF-1 and RF-2. It binds guanine nucleotides and has strong preference for UGA stop codons. It may interact directly with the ribosome. The stimulation of RF-1 and RF-2 is significantly reduced by GTP and GDP, but not by GMP. This Streptococcus pneumoniae (strain CGSP14) protein is Peptide chain release factor 3.